The chain runs to 381 residues: Anti-sigma-I factor RsgI (381 aa).

The Cytoplasmic segment spans residues 1-63 (MRRGIIVEKN…FDFFKLRPFK (63 aa)). Residues 2–50 (RRGIIVEKNKKFVTLLTPDGQFLKAKNDRHSYEIGEEIMLPSETRMGRR) form the RsgI N-terminal anti-sigma domain. Residues 64–84 (MGIFTMTAIMLFIFIVLPVFS) form a helical membrane-spanning segment. Residues 85–381 (NNKAYAYMTI…NEDSPSAPGE (297 aa)) are Extracellular-facing. The tract at residues 198 to 381 (SDMQTREKAK…NEDSPSAPGE (184 aa)) is disordered. 4 stretches are compositionally biased toward basic and acidic residues: residues 200–210 (MQTREKAKKEG), 219–244 (SNEK…QKSD), 273–321 (GDQK…DKGN), and 349–359 (SRRDNASDRRN).

In terms of assembly, interacts (via RsgI N-terminal anti-sigma domain) with SigI.

The protein localises to the cell membrane. Its function is as follows. Anti-sigma factor for SigI. Negatively regulates SigI activity through direct interaction. This chain is Anti-sigma-I factor RsgI, found in Bacillus subtilis (strain 168).